Reading from the N-terminus, the 155-residue chain is SsrA-binding protein (155 aa).

The protein belongs to the SmpB family.

The protein localises to the cytoplasm. Functionally, required for rescue of stalled ribosomes mediated by trans-translation. Binds to transfer-messenger RNA (tmRNA), required for stable association of tmRNA with ribosomes. tmRNA and SmpB together mimic tRNA shape, replacing the anticodon stem-loop with SmpB. tmRNA is encoded by the ssrA gene; the 2 termini fold to resemble tRNA(Ala) and it encodes a 'tag peptide', a short internal open reading frame. During trans-translation Ala-aminoacylated tmRNA acts like a tRNA, entering the A-site of stalled ribosomes, displacing the stalled mRNA. The ribosome then switches to translate the ORF on the tmRNA; the nascent peptide is terminated with the 'tag peptide' encoded by the tmRNA and targeted for degradation. The ribosome is freed to recommence translation, which seems to be the essential function of trans-translation. This chain is SsrA-binding protein, found in Geobacillus thermodenitrificans (strain NG80-2).